The sequence spans 1467 residues: Neuropathy target esterase sws (1467 aa).

The Lumenal segment spans residues Met-1 to Thr-34. A helical membrane pass occupies residues Met-35–Phe-55. Residues Lys-56–Asn-1467 are Cytoplasmic-facing. Ile-174–Arg-301 is a binding site for a nucleoside 3',5'-cyclic phosphate. Disordered regions lie at residues Thr-332 to Pro-353 and Met-372 to Gly-416. Positions Ser-339 to Ala-350 are enriched in low complexity. A phosphoserine mark is found at Ser-450 and Ser-459. Residues Glu-488–Arg-615 and Ile-604–Arg-731 contribute to the a nucleoside 3',5'-cyclic phosphate site. Residues Leu-958 to Arg-1124 enclose the PNPLA domain. A GXGXXG motif is present at residues Gly-962–Gly-967. The short motif at Gly-989–Gly-993 is the GXSXG element. Ser-991 (nucleophile) is an active-site residue. The Proton acceptor role is filled by Asp-1111. The short motif at Asp-1111–Gly-1113 is the DGA/G element. The residue at position 1205 (Ser-1205) is a Phosphoserine. The disordered stretch occupies residues Arg-1377–Asn-1467. The segment covering Ser-1382–Ala-1393 has biased composition (polar residues). 2 stretches are compositionally biased toward basic and acidic residues: residues Arg-1396–Asn-1406 and Leu-1448–Arg-1458.

Belongs to the NTE family. As to quaternary structure, interacts with Pka-C3; interaction inhibits the catalytic function of Pka-C3 and the esterase activity of sws.

It localises to the endoplasmic reticulum membrane. It carries out the reaction a 1-acyl-sn-glycero-3-phosphocholine + H2O = sn-glycerol 3-phosphocholine + a fatty acid + H(+). Functionally, phospholipase B that deacylates intracellular phosphatidylcholine (PtdCho), generating glycerophosphocholine (GroPtdCho). This deacylation occurs at both sn-2 and sn-1 positions of PtdCho. Its specific chemical modification by certain organophosphorus (OP) compounds leads to distal axonopathy. Plays a role in the signaling mechanism between neurons and glia that regulates glia wrapping during development of the adult brain. Essential for membrane lipid homeostasis and cell survival in both neurons and glia of the adult brain. This is Neuropathy target esterase sws from Drosophila yakuba (Fruit fly).